The chain runs to 550 residues: Glucose import ATP-binding protein TsgD13 (550 aa).

ABC transporter domains lie at 7–270 (LRME…VGRE) and 287–533 (LRAR…TGGG). 39–46 (GENGAGKS) provides a ligand contact to ATP. Residues 529 to 550 (MTGGGDATATAGAQVRGLGGSS) form a disordered region.

Belongs to the ABC transporter superfamily. In terms of assembly, the complex is composed of two ATP-binding proteins (TsgD13), two transmembrane proteins (TsgB13 and TsgC13) and a solute-binding protein (TsgA13).

The protein resides in the cell membrane. It catalyses the reaction D-glucose(out) + ATP + H2O = D-glucose(in) + ADP + phosphate + H(+). Its function is as follows. Part of an ABC transporter complex involved in glucose import. Responsible for energy coupling to the transport system. This chain is Glucose import ATP-binding protein TsgD13 (tsgD13), found in Haloferax volcanii (strain ATCC 29605 / DSM 3757 / JCM 8879 / NBRC 14742 / NCIMB 2012 / VKM B-1768 / DS2) (Halobacterium volcanii).